The chain runs to 121 residues: Large ribosomal subunit protein bL17 (121 aa).

This sequence belongs to the bacterial ribosomal protein bL17 family. In terms of assembly, part of the 50S ribosomal subunit. Contacts protein L32.

The sequence is that of Large ribosomal subunit protein bL17 from Mycoplasmopsis agalactiae (strain NCTC 10123 / CIP 59.7 / PG2) (Mycoplasma agalactiae).